The following is a 593-amino-acid chain: Uncoordinated protein 58 (593 aa).

6 consecutive transmembrane segments (helical) span residues 186–206 (VILV…LMLL), 291–311 (TFPT…YGEV), 320–340 (VFSV…AADI), 402–422 (PIGA…AMFI), 430–450 (FIHA…GDIV), and 455–475 (IFLS…TMCV).

The protein belongs to the two pore domain potassium channel (TC 1.A.1.8) family.

The protein localises to the membrane. Functionally, has a role in mobility, possibly in the transport of potassium in muscles. In Caenorhabditis briggsae, this protein is Uncoordinated protein 58.